Reading from the N-terminus, the 495-residue chain is Glycerol kinase (495 aa).

Thr11 lines the ADP pocket. 3 residues coordinate ATP: Thr11, Thr12, and Ser13. Thr11 is a binding site for sn-glycerol 3-phosphate. Arg15 provides a ligand contact to ADP. Arg81, Glu82, Tyr133, and Asp242 together coordinate sn-glycerol 3-phosphate. Glycerol-binding residues include Arg81, Glu82, Tyr133, Asp242, and Gln243. Residues Thr264 and Gly307 each contribute to the ADP site. Thr264, Gly307, Gln311, and Gly408 together coordinate ATP. ADP contacts are provided by Gly408 and Asn412.

This sequence belongs to the FGGY kinase family.

The enzyme catalyses glycerol + ATP = sn-glycerol 3-phosphate + ADP + H(+). Its pathway is polyol metabolism; glycerol degradation via glycerol kinase pathway; sn-glycerol 3-phosphate from glycerol: step 1/1. With respect to regulation, inhibited by fructose 1,6-bisphosphate (FBP). Its function is as follows. Key enzyme in the regulation of glycerol uptake and metabolism. Catalyzes the phosphorylation of glycerol to yield sn-glycerol 3-phosphate. This Acinetobacter baylyi (strain ATCC 33305 / BD413 / ADP1) protein is Glycerol kinase.